The sequence spans 608 residues: Chaperone protein HtpG (608 aa).

Positions 1 to 332 are a; substrate-binding; it reads MQFQTEVNQL…VEDLPLNVSR (332 aa). Residues 333–536 form a b region; sequence EILQENQILK…KNKPDFAMQQ (204 aa). Positions 537–608 are c; the sequence is LLKQMGQEQN…LTKIINKAFS (72 aa).

Belongs to the heat shock protein 90 family. As to quaternary structure, homodimer.

The protein resides in the cytoplasm. Its function is as follows. Molecular chaperone. Has ATPase activity. This is Chaperone protein HtpG from Campylobacter jejuni subsp. jejuni serotype O:23/36 (strain 81-176).